The primary structure comprises 195 residues: Cysteine/O-acetylserine efflux protein (195 aa).

Residues methionine 1 to phenylalanine 9 lie on the Periplasmic side of the membrane. Residues tryptophan 10–threonine 32 traverse the membrane as a helical segment. The Cytoplasmic portion of the chain corresponds to serine 33–methionine 46. The helical transmembrane segment at serine 47–isoleucine 67 threads the bilayer. Over aspartate 68–proline 69 the chain is Periplasmic. A helical transmembrane segment spans residues alanine 70–isoleucine 90. Topologically, residues alanine 91–proline 104 are cytoplasmic. Residues isoleucine 105–valine 125 form a helical membrane-spanning segment. The Periplasmic portion of the chain corresponds to threonine 126–tryptophan 141. A helical transmembrane segment spans residues valine 142–leucine 162. Residues alanine 163–arginine 176 are Cytoplasmic-facing. The chain crosses the membrane as a helical span at residues glutamine 177–phenylalanine 194. Residue tyrosine 195 is a topological domain, periplasmic.

Belongs to the Rht family.

It is found in the cell inner membrane. The catalysed reaction is O-acetyl-L-serine(in) = O-acetyl-L-serine(out). It carries out the reaction L-cysteine(in) = L-cysteine(out). Functionally, exporter of O-acetylserine (OAS) and cysteine. In Shigella flexneri serotype 5b (strain 8401), this protein is Cysteine/O-acetylserine efflux protein (eamB).